The sequence spans 269 residues: 4-hydroxy-tetrahydrodipicolinate reductase (269 aa).

Residues 11 to 16 and Glu37 contribute to the NAD(+) site; that span reads GASGRM. An NADP(+)-binding site is contributed by Arg38. Residues 101 to 103 and 125 to 128 contribute to the NAD(+) site; these read GTT and AGNM. His158 functions as the Proton donor/acceptor in the catalytic mechanism. His159 is a (S)-2,3,4,5-tetrahydrodipicolinate binding site. Lys162 (proton donor) is an active-site residue. Position 168 to 169 (168 to 169) interacts with (S)-2,3,4,5-tetrahydrodipicolinate; sequence GT.

It belongs to the DapB family.

It localises to the cytoplasm. It catalyses the reaction (S)-2,3,4,5-tetrahydrodipicolinate + NAD(+) + H2O = (2S,4S)-4-hydroxy-2,3,4,5-tetrahydrodipicolinate + NADH + H(+). The enzyme catalyses (S)-2,3,4,5-tetrahydrodipicolinate + NADP(+) + H2O = (2S,4S)-4-hydroxy-2,3,4,5-tetrahydrodipicolinate + NADPH + H(+). Its pathway is amino-acid biosynthesis; L-lysine biosynthesis via DAP pathway; (S)-tetrahydrodipicolinate from L-aspartate: step 4/4. In terms of biological role, catalyzes the conversion of 4-hydroxy-tetrahydrodipicolinate (HTPA) to tetrahydrodipicolinate. The polypeptide is 4-hydroxy-tetrahydrodipicolinate reductase (Cereibacter sphaeroides (strain ATCC 17023 / DSM 158 / JCM 6121 / CCUG 31486 / LMG 2827 / NBRC 12203 / NCIMB 8253 / ATH 2.4.1.) (Rhodobacter sphaeroides)).